Reading from the N-terminus, the 154-residue chain is Large ribosomal subunit protein uL11 (154 aa).

It belongs to the universal ribosomal protein uL11 family. As to quaternary structure, part of the ribosomal stalk of the 50S ribosomal subunit. Interacts with L10 and the large rRNA to form the base of the stalk. L10 forms an elongated spine to which L12 dimers bind in a sequential fashion forming a multimeric L10(L12)X complex. One or more lysine residues are methylated.

Forms part of the ribosomal stalk which helps the ribosome interact with GTP-bound translation factors. In Leuconostoc mesenteroides subsp. mesenteroides (strain ATCC 8293 / DSM 20343 / BCRC 11652 / CCM 1803 / JCM 6124 / NCDO 523 / NBRC 100496 / NCIMB 8023 / NCTC 12954 / NRRL B-1118 / 37Y), this protein is Large ribosomal subunit protein uL11.